The chain runs to 113 residues: uncharacterized protein (113 aa).

The first 20 residues, 1–20 (MMKKSILAFLLLTSSAAALA), serve as a signal peptide directing secretion.

This is an uncharacterized protein from Escherichia coli (strain K12).